Here is a 113-residue protein sequence, read N- to C-terminus: Large ribosomal subunit protein uL22 (113 aa).

The protein belongs to the universal ribosomal protein uL22 family. Part of the 50S ribosomal subunit.

In terms of biological role, this protein binds specifically to 23S rRNA; its binding is stimulated by other ribosomal proteins, e.g. L4, L17, and L20. It is important during the early stages of 50S assembly. It makes multiple contacts with different domains of the 23S rRNA in the assembled 50S subunit and ribosome. Functionally, the globular domain of the protein is located near the polypeptide exit tunnel on the outside of the subunit, while an extended beta-hairpin is found that lines the wall of the exit tunnel in the center of the 70S ribosome. This is Large ribosomal subunit protein uL22 from Mycoplasmopsis synoviae (strain 53) (Mycoplasma synoviae).